A 394-amino-acid polypeptide reads, in one-letter code: MNKKSIRDVDLKGKRVFCRVDFNVPMKEGKITDETRIRAALPTIQYLVEQGAKVILASHLGRPKGQAVEELRLTPVAARLGELLGKDVKKADEAFGPVAQEMVAAMNEGDVLVLENVRFYAGEEKNDAELAKEFAALADIFVNDAFGAAHRAHASTAGIADYLPAVSGLLMEKELEVLGKALSNPERPFTAIIGGAKVKDKIGVIRHLLDKVDNLIIGGGLAYTFVKALGHEIGLSLCEDDKIELAKEFMQLAKEKGVNFYMPVDVVITEEFSETATTKIVGIDSIPSNWEGVDIGPKTREIYADVIKNSKLVVWNGPMGVFEMTPFSQGTKAVGQALADAEGTYSVIGGGDSAAAVEKFGMADKMSHISTGGGASLEFMEGKELPGVVCLNDK.

Residues 21–23 (DFN), arginine 36, 59–62 (HLGR), arginine 118, and arginine 151 each bind substrate. Serine 183 is modified (phosphoserine). Residues lysine 201 and glycine 292 each contribute to the ATP site. Phosphothreonine is present on threonine 299. Residues glutamate 323 and 350-353 (GGDS) contribute to the ATP site.

Belongs to the phosphoglycerate kinase family. As to quaternary structure, monomer.

It localises to the cytoplasm. The enzyme catalyses (2R)-3-phosphoglycerate + ATP = (2R)-3-phospho-glyceroyl phosphate + ADP. It participates in carbohydrate degradation; glycolysis; pyruvate from D-glyceraldehyde 3-phosphate: step 2/5. This is Phosphoglycerate kinase from Bacillus thuringiensis subsp. konkukian (strain 97-27).